Reading from the N-terminus, the 61-residue chain is [Thr6]-bradykinyl-Val,Asp (61 aa).

Positions 1–22 (MSFLKKSLFLVLFLGLVSFSIC) are cleaved as a signal peptide. The propeptide occupies 23–50 (EEEKRETEEEENEDEMDKESEEKRESPE). Positions 24–61 (EEKRETEEEENEDEMDKESEEKRESPERPPGFTPFRVD) are disordered. The span at 30-41 (EEEENEDEMDKE) shows a compositional bias: acidic residues. Pro-53 is modified (4-hydroxyproline; in form [Hyp3,Thr6]-bradykinyl-Val,Asp and [Hyp3,Thr6]-bradykinin).

The protein belongs to the frog skin active peptide (FSAP) family. Bradykinin-related peptide subfamily. In terms of tissue distribution, expressed by the skin glands.

It localises to the secreted. Its function is as follows. Induces relaxation of rat smooth muscle from tail artery (EC(50)=16.8 nM) and contraction of that from ileum (EC(50)=205 nM), urinary bladder (EC(50)=895 nM) and uterus (EC(50)=60.3 nM). Binds to both bradykinin receptor B1 (BDKRB1) and B2 (BDKRB2). [Hyp3,Thr6]-bradykinin: Induces relaxation of rat smooth muscle from tail artery (EC(50)=56.7 nM) and contraction of that from ileum (EC(50)=588 nM), urinary bladder (EC(50)=4.6 uM) and uterus (EC(50)=3.9 nM). Binds to both bradykinin receptor B1 (BDKRB1) and B2 (BDKRB2). In arterial smooth muscle, the effect via BDKRB1 is stronger, in uterus, ileum and urinary bladder that via BDKRB2. Functionally, induces relaxation of rat smooth muscle from tail artery (EC(50)=10.8 nM) and contraction of that from ileum (EC(50)=645 nM), urinary bladder (EC(50)=1.1 uM) and uterus (EC(50)=1.2 uM). Binds to both bradykinin receptor B1 (BDKRB1) and B2 (BDKRB2). Apart from uterus smooth muscle, the effect via B2 is stronger. In terms of biological role, [Hyp3,Thr6]-bradykinyl-Val,Asp: Induces relaxation of rat smooth muscle from tail artery (EC(50)=3.5 nM) and contraction of that from ileum (EC(50)=223 nM), urinary bladder (EC(50)=1.5 uM) and uterus (EC(50)=356 nM). Binds to both bradykinin receptor B1 (BDKRB1) and B2 (BDKRB2); the effects via B2 a stronger. The protein is [Thr6]-bradykinyl-Val,Asp of Agalychnis callidryas (Red-eyed tree frog).